We begin with the raw amino-acid sequence, 115 residues long: NAD(P)H-quinone oxidoreductase subunit M (115 aa).

It belongs to the complex I NdhM subunit family. As to quaternary structure, NDH-1 can be composed of about 15 different subunits; different subcomplexes with different compositions have been identified which probably have different functions.

The protein localises to the cellular thylakoid membrane. It carries out the reaction a plastoquinone + NADH + (n+1) H(+)(in) = a plastoquinol + NAD(+) + n H(+)(out). The catalysed reaction is a plastoquinone + NADPH + (n+1) H(+)(in) = a plastoquinol + NADP(+) + n H(+)(out). NDH-1 shuttles electrons from an unknown electron donor, via FMN and iron-sulfur (Fe-S) centers, to quinones in the respiratory and/or the photosynthetic chain. The immediate electron acceptor for the enzyme in this species is believed to be plastoquinone. Couples the redox reaction to proton translocation, and thus conserves the redox energy in a proton gradient. Cyanobacterial NDH-1 also plays a role in inorganic carbon-concentration. This Synechococcus sp. (strain CC9902) protein is NAD(P)H-quinone oxidoreductase subunit M.